Reading from the N-terminus, the 73-residue chain is Translation initiation factor IF-1 (73 aa).

The S1-like domain maps to 1 to 72 (MAKQDVIEME…TKGRITYRLR (72 aa)).

The protein belongs to the IF-1 family. As to quaternary structure, component of the 30S ribosomal translation pre-initiation complex which assembles on the 30S ribosome in the order IF-2 and IF-3, IF-1 and N-formylmethionyl-tRNA(fMet); mRNA recruitment can occur at any time during PIC assembly.

The protein resides in the cytoplasm. In terms of biological role, one of the essential components for the initiation of protein synthesis. Stabilizes the binding of IF-2 and IF-3 on the 30S subunit to which N-formylmethionyl-tRNA(fMet) subsequently binds. Helps modulate mRNA selection, yielding the 30S pre-initiation complex (PIC). Upon addition of the 50S ribosomal subunit IF-1, IF-2 and IF-3 are released leaving the mature 70S translation initiation complex. The sequence is that of Translation initiation factor IF-1 from Gloeobacter violaceus (strain ATCC 29082 / PCC 7421).